A 386-amino-acid chain; its full sequence is Succinate--CoA ligase [ADP-forming] subunit beta (386 aa).

The 236-residue stretch at 9–244 (KEILRSYGVS…LDEEDPKEVE (236 aa)) folds into the ATP-grasp domain. ATP-binding positions include K46, 53 to 55 (GRG), E99, C102, and E107. 2 residues coordinate Mg(2+): N199 and D213. Substrate-binding positions include N264 and 321–323 (GIM).

The protein belongs to the succinate/malate CoA ligase beta subunit family. As to quaternary structure, heterotetramer of two alpha and two beta subunits. It depends on Mg(2+) as a cofactor.

The catalysed reaction is succinate + ATP + CoA = succinyl-CoA + ADP + phosphate. It catalyses the reaction GTP + succinate + CoA = succinyl-CoA + GDP + phosphate. It participates in carbohydrate metabolism; tricarboxylic acid cycle; succinate from succinyl-CoA (ligase route): step 1/1. Its function is as follows. Succinyl-CoA synthetase functions in the citric acid cycle (TCA), coupling the hydrolysis of succinyl-CoA to the synthesis of either ATP or GTP and thus represents the only step of substrate-level phosphorylation in the TCA. The beta subunit provides nucleotide specificity of the enzyme and binds the substrate succinate, while the binding sites for coenzyme A and phosphate are found in the alpha subunit. The sequence is that of Succinate--CoA ligase [ADP-forming] subunit beta from Geobacillus thermodenitrificans (strain NG80-2).